A 394-amino-acid polypeptide reads, in one-letter code: MNKKSIRDIDVKGKRVFTRVDFNVPLEDGKITDDTRIRAALPTIKHLVDGGAKVILASHMGRPKGEKNPEFSLAPVVARLSELLGKDIKLVEEAYGPVAEEAVSKLEEGDVIVLENVRFYPGETKNDPELAEGFAKLADVFVNDAFGAAHRAHASTEGIAHHVETAVAGLLIEKELQVLGKALSNPDRPFTAIIGGSKVADKIGVIDHLLDIVDTLIIGGGLSYTFLKAQGYEVGTSLLEVDKIEQAKEFMKKAEDKGVKFLMPVDCVITKEFGEETYVGSRDIDSIPADHMSLDIGPKTVELYAEAIKASKLVVWNGPMGVFELDKYANGTKGVAQALADSDAYSIIGGGDSAAAAEKFGLADKMSHISTGGGASLEFMEGKALPGVEALNDK.

Residues 21 to 23 (DFN), Arg36, 59 to 62 (HMGR), Arg118, and Arg151 contribute to the substrate site. Residues Lys202, Glu324, and 350–353 (GGDS) each bind ATP.

The protein belongs to the phosphoglycerate kinase family. In terms of assembly, monomer.

The protein resides in the cytoplasm. The enzyme catalyses (2R)-3-phosphoglycerate + ATP = (2R)-3-phospho-glyceroyl phosphate + ADP. The protein operates within carbohydrate degradation; glycolysis; pyruvate from D-glyceraldehyde 3-phosphate: step 2/5. This is Phosphoglycerate kinase from Exiguobacterium sibiricum (strain DSM 17290 / CCUG 55495 / CIP 109462 / JCM 13490 / 255-15).